A 407-amino-acid chain; its full sequence is Tyrosine--tRNA ligase (407 aa).

Y35 serves as a coordination point for L-tyrosine. The short motif at 40-49 (PTADSLHVGH) is the 'HIGH' region element. The L-tyrosine site is built by Y168 and Q172. The 'KMSKS' region signature appears at 228 to 232 (KMGKT). Residue K231 coordinates ATP. In terms of domain architecture, S4 RNA-binding spans 341 to 405 (NSLVDLLAKC…RGKKNFNRIV (65 aa)).

It belongs to the class-I aminoacyl-tRNA synthetase family. TyrS type 1 subfamily. As to quaternary structure, homodimer.

It is found in the cytoplasm. It catalyses the reaction tRNA(Tyr) + L-tyrosine + ATP = L-tyrosyl-tRNA(Tyr) + AMP + diphosphate + H(+). In terms of biological role, catalyzes the attachment of tyrosine to tRNA(Tyr) in a two-step reaction: tyrosine is first activated by ATP to form Tyr-AMP and then transferred to the acceptor end of tRNA(Tyr). The sequence is that of Tyrosine--tRNA ligase from Clostridium botulinum (strain Loch Maree / Type A3).